The sequence spans 872 residues: Protein SEY1 (872 aa).

The Cytoplasmic segment spans residues 1-749; it reads MVANGHFAGV…KRSAIGGITQ (749 aa). The 246-residue stretch at 49–294 folds into the GB1/RHD3-type G domain; it reads GFNYHLISVF…IEGGIFLPEY (246 aa). 59–66 contributes to the GTP binding site; that stretch reads GSQSTGKS. The stretch at 482–504 forms a coiled coil; it reads SNYQQELSLYQKDLENIGGQLRR. Residues 676–704 are disordered; the sequence is LDKWIGHTPSSATPADEEDLTPIGGVDED. Residues 690–704 are compositionally biased toward acidic residues; it reads ADEEDLTPIGGVDED. Residues 750–770 traverse the membrane as a helical segment; it reads VPLYFYGLLLALGWNEIVAVL. Topologically, residues 771-773 are lumenal; sequence RNP. A helical transmembrane segment spans residues 774–794; it reads AYFLLLFVCAVTAYVTYQLNL. Residues 795 to 872 lie on the Cytoplasmic side of the membrane; sequence WGPIIKMTEA…IDDADDDDDF (78 aa). Positions 849–872 are disordered; sequence NRKSAGGFQNNRSHIDDADDDDDF.

It belongs to the TRAFAC class dynamin-like GTPase superfamily. GB1/RHD3 GTPase family. RHD3 subfamily.

It is found in the endoplasmic reticulum membrane. In terms of biological role, cooperates with the reticulon proteins and tubule-shaping DP1 family proteins to generate and maintain the structure of the tubular endoplasmic reticulum network. Has GTPase activity, which is required for its function in ER organization. This Paracoccidioides brasiliensis (strain Pb03) protein is Protein SEY1.